Here is a 318-residue protein sequence, read N- to C-terminus: Homoserine kinase (318 aa).

97-107 (PIGSGLGSSAC) contacts ATP.

The protein belongs to the GHMP kinase family. Homoserine kinase subfamily.

The protein localises to the cytoplasm. It catalyses the reaction L-homoserine + ATP = O-phospho-L-homoserine + ADP + H(+). It functions in the pathway amino-acid biosynthesis; L-threonine biosynthesis; L-threonine from L-aspartate: step 4/5. In terms of biological role, catalyzes the ATP-dependent phosphorylation of L-homoserine to L-homoserine phosphate. This chain is Homoserine kinase, found in Photobacterium profundum (strain SS9).